The chain runs to 160 residues: S-ribosylhomocysteine lyase (160 aa).

Fe cation-binding residues include histidine 57, histidine 61, and cysteine 127.

Belongs to the LuxS family. In terms of assembly, homodimer. Fe cation is required as a cofactor.

The enzyme catalyses S-(5-deoxy-D-ribos-5-yl)-L-homocysteine = (S)-4,5-dihydroxypentane-2,3-dione + L-homocysteine. Functionally, involved in the synthesis of autoinducer 2 (AI-2) which is secreted by bacteria and is used to communicate both the cell density and the metabolic potential of the environment. The regulation of gene expression in response to changes in cell density is called quorum sensing. Catalyzes the transformation of S-ribosylhomocysteine (RHC) to homocysteine (HC) and 4,5-dihydroxy-2,3-pentadione (DPD). The chain is S-ribosylhomocysteine lyase from Streptococcus agalactiae serotype V (strain ATCC BAA-611 / 2603 V/R).